We begin with the raw amino-acid sequence, 166 residues long: Small ribosomal subunit protein uS5 (166 aa).

The S5 DRBM domain maps to 11–74; it reads FLEKLIAVNR…EKARRNMVDV (64 aa).

It belongs to the universal ribosomal protein uS5 family. As to quaternary structure, part of the 30S ribosomal subunit. Contacts proteins S4 and S8.

Functionally, with S4 and S12 plays an important role in translational accuracy. Located at the back of the 30S subunit body where it stabilizes the conformation of the head with respect to the body. This chain is Small ribosomal subunit protein uS5, found in Alteromonas mediterranea (strain DSM 17117 / CIP 110805 / LMG 28347 / Deep ecotype).